An 88-amino-acid polypeptide reads, in one-letter code: Small ribosomal subunit protein uS17 (88 aa).

It belongs to the universal ribosomal protein uS17 family. Part of the 30S ribosomal subunit.

Functionally, one of the primary rRNA binding proteins, it binds specifically to the 5'-end of 16S ribosomal RNA. The chain is Small ribosomal subunit protein uS17 from Pseudomonas entomophila (strain L48).